The chain runs to 824 residues: Leucine--tRNA ligase (824 aa).

A 'HIGH' region motif is present at residues 41–51; sequence PYPSGTLHVGH. A 'KMSKS' region motif is present at residues 580-584; sequence KMSKS. Position 583 (lysine 583) interacts with ATP.

It belongs to the class-I aminoacyl-tRNA synthetase family.

It is found in the cytoplasm. It catalyses the reaction tRNA(Leu) + L-leucine + ATP = L-leucyl-tRNA(Leu) + AMP + diphosphate. The chain is Leucine--tRNA ligase from Thermotoga petrophila (strain ATCC BAA-488 / DSM 13995 / JCM 10881 / RKU-1).